The sequence spans 129 residues: MGDLTLPINSGAALAIHVALSAGIVAAIIVVAAWLREKRSGARPDVPYEGGVLPAQPQQGPLNAPYFLIAALFVIFDMEAAILFAWAVAARDAGWLGLIEAAVFIGVLLLALVYLWLDGALDWVKGKRR.

The next 3 membrane-spanning stretches (helical) occupy residues L14–W34, F67–A87, and W95–L115.

It belongs to the complex I subunit 3 family. NDH-1 is composed of 14 different subunits. Subunits NuoA, H, J, K, L, M, N constitute the membrane sector of the complex.

Its subcellular location is the cell inner membrane. The enzyme catalyses a quinone + NADH + 5 H(+)(in) = a quinol + NAD(+) + 4 H(+)(out). In terms of biological role, NDH-1 shuttles electrons from NADH, via FMN and iron-sulfur (Fe-S) centers, to quinones in the respiratory chain. The immediate electron acceptor for the enzyme in this species is believed to be ubiquinone. Couples the redox reaction to proton translocation (for every two electrons transferred, four hydrogen ions are translocated across the cytoplasmic membrane), and thus conserves the redox energy in a proton gradient. This is NADH-quinone oxidoreductase subunit A from Rhodopseudomonas palustris (strain ATCC BAA-98 / CGA009).